We begin with the raw amino-acid sequence, 378 residues long: Chaperone protein DnaJ (378 aa).

The 66-residue stretch at Asp5–Gly70 folds into the J domain. Residues Gly138–Thr216 form a CR-type zinc finger. The Zn(2+) site is built by Cys151, Cys154, Cys168, Cys171, Cys190, Cys193, Cys204, and Cys207. CXXCXGXG motif repeat units follow at residues Cys151–Gly158, Cys168–Gly175, Cys190–Gly197, and Cys204–Gly211.

This sequence belongs to the DnaJ family. Homodimer. It depends on Zn(2+) as a cofactor.

The protein localises to the cytoplasm. Participates actively in the response to hyperosmotic and heat shock by preventing the aggregation of stress-denatured proteins and by disaggregating proteins, also in an autonomous, DnaK-independent fashion. Unfolded proteins bind initially to DnaJ; upon interaction with the DnaJ-bound protein, DnaK hydrolyzes its bound ATP, resulting in the formation of a stable complex. GrpE releases ADP from DnaK; ATP binding to DnaK triggers the release of the substrate protein, thus completing the reaction cycle. Several rounds of ATP-dependent interactions between DnaJ, DnaK and GrpE are required for fully efficient folding. Also involved, together with DnaK and GrpE, in the DNA replication of plasmids through activation of initiation proteins. The polypeptide is Chaperone protein DnaJ (Burkholderia cenocepacia (strain HI2424)).